Here is a 67-residue protein sequence, read N- to C-terminus: Probable Sec-independent protein translocase protein TatE (67 aa).

The chain crosses the membrane as a helical span at residues 4–21; the sequence is ISITKLLVIAALVVLLFG.

It belongs to the TatA/E family. TatE subfamily.

The protein localises to the cell inner membrane. Part of the twin-arginine translocation (Tat) system that transports large folded proteins containing a characteristic twin-arginine motif in their signal peptide across membranes. TatE shares overlapping functions with TatA. The chain is Probable Sec-independent protein translocase protein TatE from Citrobacter rodentium (strain ICC168) (Citrobacter freundii biotype 4280).